Reading from the N-terminus, the 225-residue chain is Ribosome maturation factor RimM (225 aa).

The PRC barrel domain maps to 144-225 (ADEFYWVDLI…RIVVDWEADY (82 aa)).

It belongs to the RimM family. Binds ribosomal protein uS19.

The protein resides in the cytoplasm. An accessory protein needed during the final step in the assembly of 30S ribosomal subunit, possibly for assembly of the head region. Essential for efficient processing of 16S rRNA. May be needed both before and after RbfA during the maturation of 16S rRNA. It has affinity for free ribosomal 30S subunits but not for 70S ribosomes. The chain is Ribosome maturation factor RimM from Burkholderia ambifaria (strain MC40-6).